The chain runs to 407 residues: 1-deoxy-D-xylulose 5-phosphate reductoisomerase (407 aa).

The NADPH site is built by T25, G26, S27, I28, N53, and N136. Position 137 (K137) interacts with 1-deoxy-D-xylulose 5-phosphate. E138 provides a ligand contact to NADPH. Mn(2+) is bound at residue D162. The 1-deoxy-D-xylulose 5-phosphate site is built by S163, E164, S188, and H211. Mn(2+) is bound at residue E164. G217 provides a ligand contact to NADPH. Residues S224, N229, K230, and E233 each contribute to the 1-deoxy-D-xylulose 5-phosphate site. E233 contacts Mn(2+).

The protein belongs to the DXR family. Mg(2+) is required as a cofactor. Requires Mn(2+) as cofactor.

The enzyme catalyses 2-C-methyl-D-erythritol 4-phosphate + NADP(+) = 1-deoxy-D-xylulose 5-phosphate + NADPH + H(+). Its pathway is isoprenoid biosynthesis; isopentenyl diphosphate biosynthesis via DXP pathway; isopentenyl diphosphate from 1-deoxy-D-xylulose 5-phosphate: step 1/6. Functionally, catalyzes the NADPH-dependent rearrangement and reduction of 1-deoxy-D-xylulose-5-phosphate (DXP) to 2-C-methyl-D-erythritol 4-phosphate (MEP). This Bradyrhizobium sp. (strain BTAi1 / ATCC BAA-1182) protein is 1-deoxy-D-xylulose 5-phosphate reductoisomerase.